A 178-amino-acid polypeptide reads, in one-letter code: Adenine phosphoribosyltransferase (178 aa).

This sequence belongs to the purine/pyrimidine phosphoribosyltransferase family. As to quaternary structure, homodimer.

It localises to the cytoplasm. The enzyme catalyses AMP + diphosphate = 5-phospho-alpha-D-ribose 1-diphosphate + adenine. The protein operates within purine metabolism; AMP biosynthesis via salvage pathway; AMP from adenine: step 1/1. Its function is as follows. Catalyzes a salvage reaction resulting in the formation of AMP, that is energically less costly than de novo synthesis. The chain is Adenine phosphoribosyltransferase from Cereibacter sphaeroides (strain ATCC 17029 / ATH 2.4.9) (Rhodobacter sphaeroides).